The chain runs to 96 residues: Non-specific lipid-transfer protein 2 (96 aa).

The N-terminal stretch at 1 to 27 (MMRKLAVLVLAVAMVAACGGGVVGVAG) is a signal peptide. Intrachain disulfides connect Cys-30–Cys-62, Cys-38–Cys-52, Cys-53–Cys-88, and Cys-64–Cys-95.

Functionally, transfer lipids across membranes. May play a role in plant defense or in the biosynthesis of cuticle layers. This Oryza sativa subsp. japonica (Rice) protein is Non-specific lipid-transfer protein 2 (LTP-2).